Here is a 134-residue protein sequence, read N- to C-terminus: Secreted RxLR effector protein 1 (134 aa).

The first 22 residues, 1–22 (MFCRSPLVAVILLVLATHIVLA), serve as a signal peptide directing secretion. The interval 32 to 60 (SETVPSDSSQTTRKSTRRTTSVDNKRRLR) is disordered. Over residues 37 to 52 (SDSSQTTRKSTRRTTS) the composition is skewed to low complexity. Residues 57-79 (RRLRQQIMGKDGPVVNDVHAEER) carry the RxLR-dEER motif.

The protein belongs to the RxLR effector family.

The protein resides in the secreted. It is found in the host nucleus. Functionally, effector that acts as a broad suppressor of cell death to interrupt plant immunity. Inhibits cell death induced by cell death-inducing proteins, including the PAMP elicitor INF1 from P.infestans. This chain is Secreted RxLR effector protein 1, found in Plasmopara viticola (Downy mildew of grapevine).